The following is a 620-amino-acid chain: Cryptochrome-1 (620 aa).

The region spanning 3 to 132 (VNAVHWFRKG…EVIVRISHTL (130 aa)) is the Photolyase/cryptochrome alpha/beta domain. 3 consecutive short sequence motifs (LIR) follow at residues 50-54 (NRWRF), 82-87 (DVFPRL), and 151-156 (KRFQTL). Residue S252 participates in FAD binding. 4 short sequence motifs (LIR) span residues 255-260 (LRFGCL), 271-276 (DLYKKV), 285-290 (SLYGQL), and 335-339 (TGFPW). Residue Q289 coordinates FAD. H355 contacts FAD. The LIR 8 signature appears at 379–384 (KVFEEL). 387–389 (DAD) is a binding site for FAD. Short sequence motifs (LIR) lie at residues 395–400 (GSWMWL), 411–416 (HCYCPV), 430–435 (RRYLPV), 486–491 (QIYQQL), and 492–497 (SRYRGL). The tract at residues 592-620 (GTGISAGKRPNPEEETQSVGPKVQRQSTN) is disordered.

The protein belongs to the DNA photolyase class-1 family. In terms of assembly, component of the circadian core oscillator, which includes the CRY proteins, CLOCK or NPAS2, BMAL1 or BMAL2, CSNK1E, and the PER proteins. Requires FAD as cofactor. It depends on (6R)-5,10-methylene-5,6,7,8-tetrahydrofolate as a cofactor. Expressed in the retina. High levels found in ganglion cells of the retina.

The protein resides in the cytoplasm. It localises to the nucleus. Its function is as follows. Transcriptional repressor which forms a core component of the circadian clock. The circadian clock, an internal time-keeping system, regulates various physiological processes through the generation of approximately 24 hour circadian rhythms in gene expression, which are translated into rhythms in metabolism and behavior. It is derived from the Latin roots 'circa' (about) and 'diem' (day) and acts as an important regulator of a wide array of physiological functions including metabolism, sleep, body temperature, blood pressure, endocrine, immune, cardiovascular, and renal function. Consists of two major components: the central clock, residing in the suprachiasmatic nucleus (SCN) of the brain, and the peripheral clocks that are present in nearly every tissue and organ system. Both the central and peripheral clocks can be reset by environmental cues, also known as Zeitgebers (German for 'timegivers'). The predominant Zeitgeber for the central clock is light, which is sensed by retina and signals directly to the SCN. The central clock entrains the peripheral clocks through neuronal and hormonal signals, body temperature and feeding-related cues, aligning all clocks with the external light/dark cycle. Circadian rhythms allow an organism to achieve temporal homeostasis with its environment at the molecular level by regulating gene expression to create a peak of protein expression once every 24 hours to control when a particular physiological process is most active with respect to the solar day. Transcription and translation of core clock components (CLOCK, NPAS2, BMAL1, BMAL2, PER1, PER2, PER3, CRY1 and CRY2) plays a critical role in rhythm generation, whereas delays imposed by post-translational modifications (PTMs) are important for determining the period (tau) of the rhythms (tau refers to the period of a rhythm and is the length, in time, of one complete cycle). A diurnal rhythm is synchronized with the day/night cycle, while the ultradian and infradian rhythms have a period shorter and longer than 24 hours, respectively. Disruptions in the circadian rhythms contribute to the pathology of cardiovascular diseases, cancer, metabolic syndromes and aging. A transcription/translation feedback loop (TTFL) forms the core of the molecular circadian clock mechanism. Transcription factors, CLOCK or NPAS2 and BMAL1 or BMAL2, form the positive limb of the feedback loop, act in the form of a heterodimer and activate the transcription of core clock genes and clock-controlled genes (involved in key metabolic processes), harboring E-box elements (5'-CACGTG-3') within their promoters. The core clock genes: PER1/2/3 and CRY1/2 which are transcriptional repressors form the negative limb of the feedback loop and interact with the CLOCK|NPAS2-BMAL1|BMAL2 heterodimer inhibiting its activity and thereby negatively regulating their own expression. This heterodimer also activates nuclear receptors NR1D1, NR1D2, RORA, RORB and RORG, which form a second feedback loop and which activate and repress BMAL1 transcription, respectively. CRY1 and CRY2 have redundant functions but also differential and selective contributions at least in defining the pace of the SCN circadian clock and its circadian transcriptional outputs. More potent transcriptional repressor in cerebellum and liver than CRY2, though more effective in lengthening the period of the SCN oscillator. On its side, CRY2 seems to play a critical role in tuning SCN circadian period by opposing the action of CRY1. With CRY2, is dispensable for circadian rhythm generation but necessary for the development of intercellular networks for rhythm synchrony. Capable of translocating circadian clock core proteins such as PER proteins to the nucleus. Interacts with CLOCK:BMAL1 independently of PER proteins and is found at CLOCK:BMAL1-bound sites, suggesting that CRY may act as a molecular gatekeeper to maintain CLOCK:BMAL1 in a poised and repressed state until the proper time for transcriptional activation. The protein is Cryptochrome-1 (CRY1) of Sylvia borin (Garden warbler).